Here is a 133-residue protein sequence, read N- to C-terminus: Large ribosomal subunit protein bL19 (133 aa).

Belongs to the bacterial ribosomal protein bL19 family.

Functionally, this protein is located at the 30S-50S ribosomal subunit interface and may play a role in the structure and function of the aminoacyl-tRNA binding site. This chain is Large ribosomal subunit protein bL19, found in Sulfurihydrogenibium sp. (strain YO3AOP1).